Here is a 724-residue protein sequence, read N- to C-terminus: Ribosomal RNA large subunit methyltransferase K/L (724 aa).

The THUMP domain maps to 42 to 153 (DAQRLVLWSR…KGRATLSVDL (112 aa)).

The protein belongs to the methyltransferase superfamily. RlmKL family.

The protein localises to the cytoplasm. It catalyses the reaction guanosine(2445) in 23S rRNA + S-adenosyl-L-methionine = N(2)-methylguanosine(2445) in 23S rRNA + S-adenosyl-L-homocysteine + H(+). The catalysed reaction is guanosine(2069) in 23S rRNA + S-adenosyl-L-methionine = N(2)-methylguanosine(2069) in 23S rRNA + S-adenosyl-L-homocysteine + H(+). Functionally, specifically methylates the guanine in position 2445 (m2G2445) and the guanine in position 2069 (m7G2069) of 23S rRNA. The sequence is that of Ribosomal RNA large subunit methyltransferase K/L from Xylella fastidiosa (strain 9a5c).